The following is a 772-amino-acid chain: Cellulosomal-scaffolding protein B (772 aa).

Residues D1–L80 form the Cohesin 1 domain. Residues G81–S93 form a linker (Pro/Thr-rich) region. The region spanning D94–K240 is the Cohesin 2 domain. The segment covering N235–P276 has biased composition (low complexity). Disordered regions lie at residues N235–V277 and V438–D464. Positions G241 to P272 are linker (Pro/Thr-rich). The CBM3 domain maps to V277 to G435. Residues V438–P461 are compositionally biased toward low complexity. Residues P440–P461 are linker (Pro/Thr-rich). The Cohesin 3 domain occupies S462–L607. The 68-residue stretch at I704–A771 folds into the Dockerin domain.

Post-translationally, O-glycosylated on most but not all Thr residues of the linker units.

Its subcellular location is the secreted. In terms of biological role, acts as a scaffolding protein in the cellulosome. It promotes binding of cellulose to the catalytic domains of the cellulolytic enzymes probably through the binding of the nine repeated domains with dockerin domains present in catalytic subunits of the cellulosome. This is Cellulosomal-scaffolding protein B (cipB) from Acetivibrio thermocellus (Hungateiclostridium thermocellum).